A 199-amino-acid polypeptide reads, in one-letter code: MKPGCTLFFLLCSALTVTTEAHAQTPDTATTAPYLLAGAPTFDLSISQFREDFNSQNPSLPLNEFRAIDSSPDKANLTRAASKINENLYASTALERGTLKIKSIQMTWLPIQGPEQKAAKAKAQEYMAAVIRTLTPLMTKTQSQKKLQSLLTAGKNKRYYTETEGALRYVVADNGEKGLTFAVEPIKLALSESLEGLNK.

An N-terminal signal peptide occupies residues 1–23 (MKPGCTLFFLLCSALTVTTEAHA).

This is an uncharacterized protein from Escherichia coli (strain K12).